A 293-amino-acid chain; its full sequence is Protein boule-like (293 aa).

Residues 1 to 16 are compositionally biased toward polar residues; it reads METESRAQSTNQTQTD. A disordered region spans residues 1-39; it reads METESRAQSTNQTQTDSLSPSPNPVSPVPLNNPTSGPRY. 3 positions are modified to phosphoserine: Ser-19, Ser-21, and Ser-26. Residues 45–122 enclose the RRM domain; that stretch reads NRIFVGGIDF…KKLNIGPAIR (78 aa). One can recognise a DAZ domain in the interval 172–196; it reads PSRSISSSPVMVAQPVYQQPAYHYQ.

Belongs to the RRM DAZ family. As to quaternary structure, interacts with DAZ1 and DAZL. In terms of tissue distribution, testis specific. Not expressed in early embryos, primoridal germ cells and spermatogonial cells. First expressed in the cytoplasm of spermatocytes and then persists through meiosis.

Its subcellular location is the cytoplasm. Probable RNA-binding protein, which may be required during spermatogenesis. May act by binding to the 3'-UTR of mRNAs and regulating their translation. The sequence is that of Protein boule-like from Mus musculus (Mouse).